A 1091-amino-acid polypeptide reads, in one-letter code: Error-prone DNA polymerase 1 (1091 aa).

Residues 1051–1064 (RGDEFHHGMPDDHR) show a composition bias toward basic and acidic residues. The tract at residues 1051–1080 (RGDEFHHGMPDDHRAIRKRPPPSNHDDDEV) is disordered.

The protein belongs to the DNA polymerase type-C family. DnaE2 subfamily.

Its subcellular location is the cytoplasm. It carries out the reaction DNA(n) + a 2'-deoxyribonucleoside 5'-triphosphate = DNA(n+1) + diphosphate. DNA polymerase involved in damage-induced mutagenesis and translesion synthesis (TLS). It is not the major replicative DNA polymerase. The polypeptide is Error-prone DNA polymerase 1 (Agrobacterium fabrum (strain C58 / ATCC 33970) (Agrobacterium tumefaciens (strain C58))).